Consider the following 216-residue polypeptide: MKIIHLINSDIFIGNNKKFLNFSMKKYIIFTINNLNIFDLKKIIISVLLLKKYIKFIYKKKMKILFIGTKNFFRELIYKFSRSIRQPFVCNKWISGSLTNLQNYKKMINKLKIIRKKIKFKSYTKKEKISFLKKEKKIEILFGGFRNLKKTPKLIIISDINKDKIIVNEAKRLKIKIASFLDSSDNCSKIDFILPCNNNSINSIKIILNILFKNLC.

The protein belongs to the universal ribosomal protein uS2 family.

In Carsonella ruddii (strain PV), this protein is Small ribosomal subunit protein uS2.